Consider the following 65-residue polypeptide: MPKMKTKSSAKKRLKVLGNGGVKRSMAFKRHILTKKTTKTKRQLRGTVMVHETNMASVRAMMPYA.

This sequence belongs to the bacterial ribosomal protein bL35 family.

This is Large ribosomal subunit protein bL35 from Laribacter hongkongensis (strain HLHK9).